A 92-amino-acid polypeptide reads, in one-letter code: Small ribosomal subunit protein bS18c (92 aa).

Belongs to the bacterial ribosomal protein bS18 family. Part of the 30S ribosomal subunit.

The protein localises to the plastid. The chain is Small ribosomal subunit protein bS18c (rps18) from Epifagus virginiana (Beechdrops).